The chain runs to 161 residues: Type II secretion system protein M (161 aa).

Residues 1–16 (MHNLLALWQQRTRRER) lie on the Cytoplasmic side of the membrane. A helical membrane pass occupies residues 17–36 (CLLLGMAVVLLIGLVYYTLW). Topologically, residues 37 to 161 (QPWQNREAQW…TLVLERSDEK (125 aa)) are periplasmic.

It belongs to the GSP M family. As to quaternary structure, type II secretion system is composed of four main components: the outer membrane complex, the inner membrane complex, the cytoplasmic secretion ATPase and the periplasm-spanning pseudopilus. Forms homodimers. Interacts with PulL/GspL. Interacts with PulE/GspE and PulF/GspF.

The protein localises to the cell inner membrane. In terms of biological role, inner membrane component of the type II secretion system required for the energy-dependent secretion of extracellular factors such as proteases and toxins from the periplasm. Plays a role in the complex assembly and recruits PulL resulting in a stable complex in the inner membrane. Provides thus a link between the energy-providing PulE protein in the cytoplasm and the rest of the T2SS machinery. This chain is Type II secretion system protein M (pulM), found in Klebsiella pneumoniae.